The following is a 349-amino-acid chain: Phosphoribosylformylglycinamidine cyclo-ligase (349 aa).

Belongs to the AIR synthase family.

The protein localises to the cytoplasm. The catalysed reaction is 2-formamido-N(1)-(5-O-phospho-beta-D-ribosyl)acetamidine + ATP = 5-amino-1-(5-phospho-beta-D-ribosyl)imidazole + ADP + phosphate + H(+). Its pathway is purine metabolism; IMP biosynthesis via de novo pathway; 5-amino-1-(5-phospho-D-ribosyl)imidazole from N(2)-formyl-N(1)-(5-phospho-D-ribosyl)glycinamide: step 2/2. In Bordetella avium (strain 197N), this protein is Phosphoribosylformylglycinamidine cyclo-ligase.